Here is a 327-residue protein sequence, read N- to C-terminus: 2-keto-3-deoxygluconate permease (327 aa).

10 consecutive transmembrane segments (helical) span residues 10-30 (IPGG…TFSP), 42-62 (GMIT…GASI), 73-93 (KSGT…AIAS), 95-115 (IIPE…LALV), 139-159 (AGAF…IILG), 163-183 (IASF…VGFA), 199-219 (VQTL…LTVI), 224-244 (LLGI…LIIA), 254-274 (TAGI…VLIA), and 289-309 (SLVA…TSIW).

The protein belongs to the KdgT transporter family.

Its subcellular location is the cell inner membrane. The enzyme catalyses 2-dehydro-3-deoxy-D-gluconate(in) + H(+)(in) = 2-dehydro-3-deoxy-D-gluconate(out) + H(+)(out). In terms of biological role, catalyzes the proton-dependent uptake of 2-keto-3-deoxygluconate (KDG) into the cell. The protein is 2-keto-3-deoxygluconate permease of Escherichia coli O7:K1 (strain IAI39 / ExPEC).